The sequence spans 446 residues: tRNA-2-methylthio-N(6)-dimethylallyladenosine synthase (446 aa).

Residues 3-120 form the MTTase N-terminal domain; that stretch reads QKLFIKTYGC…LPEMVNSVAH (118 aa). Positions 12, 49, 83, 157, 161, and 164 each coordinate [4Fe-4S] cluster. Positions 143–375 constitute a Radical SAM core domain; the sequence is SSEGASAFVS…QQRILQFAQD (233 aa). Positions 378–442 constitute a TRAM domain; sequence RKMVGSTQRI…PNSLRGERVD (65 aa).

The protein belongs to the methylthiotransferase family. MiaB subfamily. Monomer. Requires [4Fe-4S] cluster as cofactor.

It is found in the cytoplasm. It carries out the reaction N(6)-dimethylallyladenosine(37) in tRNA + (sulfur carrier)-SH + AH2 + 2 S-adenosyl-L-methionine = 2-methylsulfanyl-N(6)-dimethylallyladenosine(37) in tRNA + (sulfur carrier)-H + 5'-deoxyadenosine + L-methionine + A + S-adenosyl-L-homocysteine + 2 H(+). Its function is as follows. Catalyzes the methylthiolation of N6-(dimethylallyl)adenosine (i(6)A), leading to the formation of 2-methylthio-N6-(dimethylallyl)adenosine (ms(2)i(6)A) at position 37 in tRNAs that read codons beginning with uridine. This is tRNA-2-methylthio-N(6)-dimethylallyladenosine synthase from Hahella chejuensis (strain KCTC 2396).